The chain runs to 456 residues: Putative E3 ubiquitin-protein ligase XBAT31 (456 aa).

ANK repeat units follow at residues 45–74, 78–107, 112–141, 157–186, and 194–224; these read DRHS…NPDL, HKQT…NILM, NRRT…SSPV, KGAT…LVCA, and PGST…RLQR. The RING-type zinc finger occupies 319–368; that stretch reads CCICFEQVCTIEVKDCGHQMCAQCTLALCCHNKPNPTTSTVTPPVCPFCR.

The enzyme catalyses S-ubiquitinyl-[E2 ubiquitin-conjugating enzyme]-L-cysteine + [acceptor protein]-L-lysine = [E2 ubiquitin-conjugating enzyme]-L-cysteine + N(6)-ubiquitinyl-[acceptor protein]-L-lysine.. The protein operates within protein modification; protein ubiquitination. No E3 ubiquitin-protein ligase activity observed when associated with the E2 enzyme UBC8 in vitro. The chain is Putative E3 ubiquitin-protein ligase XBAT31 (XBAT31) from Arabidopsis thaliana (Mouse-ear cress).